The primary structure comprises 482 residues: Methylenetetrahydrofolate--tRNA-(uracil-5-)-methyltransferase TrmFO (482 aa).

11-16 (GAGLAG) lines the FAD pocket.

This sequence belongs to the MnmG family. TrmFO subfamily. Requires FAD as cofactor.

It localises to the cytoplasm. It catalyses the reaction uridine(54) in tRNA + (6R)-5,10-methylene-5,6,7,8-tetrahydrofolate + NADH + H(+) = 5-methyluridine(54) in tRNA + (6S)-5,6,7,8-tetrahydrofolate + NAD(+). It carries out the reaction uridine(54) in tRNA + (6R)-5,10-methylene-5,6,7,8-tetrahydrofolate + NADPH + H(+) = 5-methyluridine(54) in tRNA + (6S)-5,6,7,8-tetrahydrofolate + NADP(+). Functionally, catalyzes the folate-dependent formation of 5-methyl-uridine at position 54 (M-5-U54) in all tRNAs. This chain is Methylenetetrahydrofolate--tRNA-(uracil-5-)-methyltransferase TrmFO, found in Nitratidesulfovibrio vulgaris (strain DP4) (Desulfovibrio vulgaris).